Here is a 353-residue protein sequence, read N- to C-terminus: Protein MGF 360-11L (353 aa).

One copy of the ANK repeat lies at 59 to 88; sequence ELNTVLMKAAKENNHDLIRLFVEWGADINY.

Belongs to the asfivirus MGF 360 family. In terms of assembly, interacts with host TBK1 ad IRF7.

In terms of biological role, plays a role in virus cell tropism, and may be required for efficient virus replication in macrophages. In addition, inhibits the phosphorylation of host TBK1 and IRF7 and thereby negatively regulates the host cGAS signaling pathway and antagonizes IFN-mediated antiviral activity. The sequence is that of Protein MGF 360-11L from African swine fever virus (isolate Pig/Kenya/KEN-50/1950) (ASFV).